Reading from the N-terminus, the 370-residue chain is Peptide chain release factor 1 (370 aa).

Gln-239 carries the post-translational modification N5-methylglutamine.

The protein belongs to the prokaryotic/mitochondrial release factor family. Post-translationally, methylated by PrmC. Methylation increases the termination efficiency of RF1.

It localises to the cytoplasm. Functionally, peptide chain release factor 1 directs the termination of translation in response to the peptide chain termination codons UAG and UAA. This is Peptide chain release factor 1 from Bacteroides fragilis (strain ATCC 25285 / DSM 2151 / CCUG 4856 / JCM 11019 / LMG 10263 / NCTC 9343 / Onslow / VPI 2553 / EN-2).